We begin with the raw amino-acid sequence, 663 residues long: Pyoverdine export ATP-binding/permease protein PvdT (663 aa).

Residues 11–250 (IELRDIRKRY…PSAGVERHLQ (240 aa)) enclose the ABC transporter domain. Residue 48 to 55 (GASGSGKS) participates in ATP binding. The next 4 membrane-spanning stretches (helical) occupy residues 292–312 (ALTLLGIIIGVASVVVMLAVG), 545–565 (IAAISLLVGGIGVMNIMLMTV), 598–618 (VVGGLAGIALALCIGGVLLLG), and 626–646 (LSAIVGAFSCALVTGLVFGFM).

It belongs to the ABC transporter superfamily. Macrolide exporter (TC 3.A.1.122) family. Part of the tripartite efflux system PvdRT-OpmQ, which is composed of an inner membrane component with both ATPase and permease domains, PvdT, a periplasmic membrane fusion protein, PvdR, and an outer membrane component, OpmQ.

The protein localises to the cell inner membrane. In terms of biological role, part of the tripartite efflux system PvdRT-OpmQ required for the secretion into the extracellular milieu of the siderophore pyoverdine (PVD), which is involved in iron acquisition. This subunit binds PVD and drives its secretion by hydrolyzing ATP. The system is responsible for export of newly synthesized PVD after the final steps of biosynthesis have taken place in the periplasm. It is also responsible for recycling of PVD after internalization of ferri-PVD into the periplasm by the outer-membrane receptor FpvA and release of iron from PVD, thus making PVD available for new cycles of iron uptake. In addition, can expel unwanted metals complexed with PVD from the periplasm into the extracellular medium. The protein is Pyoverdine export ATP-binding/permease protein PvdT of Pseudomonas aeruginosa (strain ATCC 15692 / DSM 22644 / CIP 104116 / JCM 14847 / LMG 12228 / 1C / PRS 101 / PAO1).